We begin with the raw amino-acid sequence, 560 residues long: Dihydroxy-acid dehydratase (560 aa).

Residue D78 participates in Mg(2+) binding. Residue C119 coordinates [2Fe-2S] cluster. Residues D120 and K121 each coordinate Mg(2+). K121 carries the N6-carboxylysine modification. Position 192 (C192) interacts with [2Fe-2S] cluster. E446 provides a ligand contact to Mg(2+). The active-site Proton acceptor is S472.

Belongs to the IlvD/Edd family. Homodimer. [2Fe-2S] cluster serves as cofactor. The cofactor is Mg(2+).

It catalyses the reaction (2R)-2,3-dihydroxy-3-methylbutanoate = 3-methyl-2-oxobutanoate + H2O. It carries out the reaction (2R,3R)-2,3-dihydroxy-3-methylpentanoate = (S)-3-methyl-2-oxopentanoate + H2O. The protein operates within amino-acid biosynthesis; L-isoleucine biosynthesis; L-isoleucine from 2-oxobutanoate: step 3/4. It functions in the pathway amino-acid biosynthesis; L-valine biosynthesis; L-valine from pyruvate: step 3/4. Its function is as follows. Functions in the biosynthesis of branched-chain amino acids. Catalyzes the dehydration of (2R,3R)-2,3-dihydroxy-3-methylpentanoate (2,3-dihydroxy-3-methylvalerate) into 2-oxo-3-methylpentanoate (2-oxo-3-methylvalerate) and of (2R)-2,3-dihydroxy-3-methylbutanoate (2,3-dihydroxyisovalerate) into 2-oxo-3-methylbutanoate (2-oxoisovalerate), the penultimate precursor to L-isoleucine and L-valine, respectively. This is Dihydroxy-acid dehydratase from Anaeromyxobacter dehalogenans (strain 2CP-C).